Consider the following 517-residue polypeptide: MAQKDMQDFDKIIVLDYGSQYNQLITRRIREFGIFSELLPNTTTAAEIKKIAPKGIIFSGGPMSVYDGGAFSVDPEIFELGIPILGICYGMQLISFKNGGNVEASTEREYGKAEITVTDKDSDLFKGLPEKQTVWMSHGDKVTAIPEGYVTVAESDNTPFTAIENRDKHIYGIQFHTEVQNTEFGNDILKNFAFGVCGAQDNWTMNDFIDMQIEKIREQVGDKKVLLGLSGGVDSSVVGVLLHRAIGDQLVSIFVDHGLLRKGEVEQVMESLGGKFGLNIIQVDAKERFMSKLAGVSDPEKKRKIIGNEFIQVFDEEATKLNGIDFLAQGTLYTDIIESGTSTATTIKSHHNVGGLPEDMQFSLIEPLNTLFKDEVRDLGEKLGMPYELVWRQPFPGPGLGIRVLGEVTEDKLKIVRDSDLILREEFALAGLDKTVWQYFTVLPGIRSVGVMGDGRTYDYTVGIRAVNSIDGMTADFSRIPWDILQKVSVRIVNEVDHVNRIVYDITSKPPSTVEWE.

Residues 11 to 202 (KIIVLDYGSQ…AFGVCGAQDN (192 aa)) enclose the Glutamine amidotransferase type-1 domain. Cys88 (nucleophile) is an active-site residue. Residues His176 and Glu178 contribute to the active site. The region spanning 203-392 (WTMNDFIDMQ…LGMPYELVWR (190 aa)) is the GMPS ATP-PPase domain. Residue 230–236 (SGGVDSS) coordinates ATP.

In terms of assembly, homodimer.

The catalysed reaction is XMP + L-glutamine + ATP + H2O = GMP + L-glutamate + AMP + diphosphate + 2 H(+). The protein operates within purine metabolism; GMP biosynthesis; GMP from XMP (L-Gln route): step 1/1. In terms of biological role, catalyzes the synthesis of GMP from XMP. This Latilactobacillus sakei subsp. sakei (strain 23K) (Lactobacillus sakei subsp. sakei) protein is GMP synthase [glutamine-hydrolyzing].